The following is a 210-amino-acid chain: Ribosomal RNA small subunit methyltransferase G (210 aa).

Residues glycine 74, phenylalanine 79, 127–128, and arginine 143 contribute to the S-adenosyl-L-methionine site; that span reads IE.

The protein belongs to the methyltransferase superfamily. RNA methyltransferase RsmG family.

It localises to the cytoplasm. The enzyme catalyses guanosine(527) in 16S rRNA + S-adenosyl-L-methionine = N(7)-methylguanosine(527) in 16S rRNA + S-adenosyl-L-homocysteine. Its function is as follows. Specifically methylates the N7 position of guanine in position 527 of 16S rRNA. This is Ribosomal RNA small subunit methyltransferase G from Chelativorans sp. (strain BNC1).